The sequence spans 196 residues: Probable signal peptidase I-1 (196 aa).

The Cytoplasmic portion of the chain corresponds to 1–16; sequence MQNSPIPSPWQFIKEN. A helical transmembrane segment spans residues 17-35; the sequence is IPLLMVALVLALLLRFFVA. At 36 to 196 the chain is on the periplasmic side; that stretch reads EPRYIPSDSM…FVPARTIINT (161 aa). Residues S44 and K94 contribute to the active site.

This sequence belongs to the peptidase S26 family.

Its subcellular location is the cell membrane. The catalysed reaction is Cleavage of hydrophobic, N-terminal signal or leader sequences from secreted and periplasmic proteins.. The protein is Probable signal peptidase I-1 (lepB1) of Synechocystis sp. (strain ATCC 27184 / PCC 6803 / Kazusa).